The sequence spans 481 residues: MAETEKIEVRDVTRIERIGAHSHIRGLGLDDVLEARLVSQGMVGQKDARRAAGVVVQMVREGKIAGRCILLAGEPSTGKTAIAVGMAQALGTETPFTSMSGSEIYSLEMSKTEALSQALRKSIGVRIKEETEIIEGEVVEIQIERPASGTGQKVGKVTLKTTEMETNYDLGNKIIECFMKEKIQAGDVITIDKASGKVNKLGRSFTRARDYDATGAQTRFVQCPEGELQKRKEVVHTVTLHEIDVINSRTHGFLALFSGDTGEIKQEVRDQINNKVLEWREEGKAEINPGVLFIDEVHMLDIECFSFLNRALESDMAPVVVMATNRGITRIRGTNYRSPHGIPIDLLDRMIIIRTVPYSEKEVKEILKIRCEEEDCIMHPDALTILTRIATDTSLRYAIQLITTANLVCRRRKATEVNTEDVKKVYSLFLDENRSSKILKEYQDDYMFSEITEEVERDPAAGGGAKRRVEGGGGDAQPMEH.

73-80 (GEPSTGKT) provides a ligand contact to ATP. Residues 453-481 (EEVERDPAAGGGAKRRVEGGGGDAQPMEH) are disordered.

This sequence belongs to the RuvB family. In terms of assembly, forms homohexameric rings. May form a dodecamer with rept made of two stacked hexameric rings. Component of the chromatin remodeling Ino80 complex. Interacts with Myc and pont. As to expression, higher expression occurs in primordia of mesoderm, anterior and posterior midgut and cephalic furrow early in gastrulation, as well as in endoderm and mesoderm lineages during germ band extension. Later in development expression is only maintained in endoderm cells. Expressed in thoracic and abdominal segment neural precursors of all embryonic chordotonal organs.

The protein localises to the nucleus. The enzyme catalyses ATP + H2O = ADP + phosphate + H(+). In terms of biological role, acts as a transcriptional coactivator in Wg signaling caused by altered arm signaling. Pont and rept interfere antagonistically with nuclear arm signaling function, and are required to enhance or reduce arm activity, respectively. Also an essential cofactor for the normal function of Myc; required for cellular proliferation and growth. Functionally, proposed core component of the chromatin remodeling Ino80 complex which is involved in transcriptional regulation, DNA replication and probably DNA repair. The chain is RuvB-like helicase 2 from Drosophila melanogaster (Fruit fly).